A 1287-amino-acid chain; its full sequence is DNA-directed RNA polymerase subunit beta (1287 aa).

It belongs to the RNA polymerase beta chain family. As to quaternary structure, the RNAP catalytic core consists of 2 alpha, 1 beta, 1 beta' and 1 omega subunit. When a sigma factor is associated with the core the holoenzyme is formed, which can initiate transcription.

It catalyses the reaction RNA(n) + a ribonucleoside 5'-triphosphate = RNA(n+1) + diphosphate. In terms of biological role, DNA-dependent RNA polymerase catalyzes the transcription of DNA into RNA using the four ribonucleoside triphosphates as substrates. The protein is DNA-directed RNA polymerase subunit beta of Mycoplasma capricolum subsp. capricolum (strain California kid / ATCC 27343 / NCTC 10154).